Consider the following 198-residue polypeptide: DnaJ homolog subfamily C member 5 (198 aa).

Ser-8, Ser-10, Ser-12, and Ser-15 each carry phosphoserine. One can recognise a J domain in the interval 13–82 (GESLYHVLGL…RNIYDKYGSL (70 aa)). Residue Tyr-17 is modified to Phosphotyrosine. N6-acetyllysine is present on Lys-56. Ser-151 bears the Phosphoserine mark.

As to quaternary structure, oligomers. Homodimer. Interacts with the chaperone complex consisting of HSC70 and SGTA. Interacts with ZDHHC13 (via ANK repeats). Interacts with ZDHHC17 (via ANK repeats). Interacts with SYT1, SYT5 and SYT7, and with SYT9, forming a complex with SNAP25. In terms of processing, ser-10 phosphorylation induces an order-to-disorder transition triggering the interaction with Lys-58. This conformational switch modulates DNAJC5's cellular functions by reducing binding to syntaxin and synaptogamin without altering HSC70 interactions. Palmitoylated. Could be palmitoylated by DHHC3, DHHC7, DHHC15 and DHHC17. Palmitoylation occurs probably in the cysteine-rich domain and regulates DNAJC5 membrane attachment. Expressed in pancreas, kidney, skeletal muscle, liver, lung, placenta, brain and heart.

The protein localises to the cytoplasm. The protein resides in the cytosol. Its subcellular location is the membrane. It is found in the cytoplasmic vesicle. It localises to the secretory vesicle. The protein localises to the chromaffin granule membrane. The protein resides in the melanosome. Its subcellular location is the cell membrane. Its function is as follows. Acts as a general chaperone in regulated exocytosis. Acts as a co-chaperone for the SNARE protein SNAP-25. Involved in the calcium-mediated control of a late stage of exocytosis. May have an important role in presynaptic function. May be involved in calcium-dependent neurotransmitter release at nerve endings. This is DnaJ homolog subfamily C member 5 from Homo sapiens (Human).